The chain runs to 106 residues: Phosphoribosyl-ATP pyrophosphatase (106 aa).

It belongs to the PRA-PH family.

It is found in the cytoplasm. It carries out the reaction 1-(5-phospho-beta-D-ribosyl)-ATP + H2O = 1-(5-phospho-beta-D-ribosyl)-5'-AMP + diphosphate + H(+). It participates in amino-acid biosynthesis; L-histidine biosynthesis; L-histidine from 5-phospho-alpha-D-ribose 1-diphosphate: step 2/9. The chain is Phosphoribosyl-ATP pyrophosphatase from Lactiplantibacillus plantarum (strain ATCC BAA-793 / NCIMB 8826 / WCFS1) (Lactobacillus plantarum).